A 126-amino-acid chain; its full sequence is Nascent polypeptide-associated complex protein (126 aa).

The NAC-A/B domain maps to 10–77; that stretch reads PRMMKQMQKM…AKKVAKEEEK (68 aa).

The protein belongs to the NAC-alpha family. As to quaternary structure, homodimer. Interacts with the ribosome. Binds ribosomal RNA.

Its function is as follows. Contacts the emerging nascent chain on the ribosome. This is Nascent polypeptide-associated complex protein from Methanococcus maripaludis (strain C7 / ATCC BAA-1331).